The sequence spans 443 residues: Thymidine phosphorylase (443 aa).

The protein belongs to the thymidine/pyrimidine-nucleoside phosphorylase family. In terms of assembly, homodimer.

The catalysed reaction is thymidine + phosphate = 2-deoxy-alpha-D-ribose 1-phosphate + thymine. The protein operates within pyrimidine metabolism; dTMP biosynthesis via salvage pathway; dTMP from thymine: step 1/2. Functionally, the enzymes which catalyze the reversible phosphorolysis of pyrimidine nucleosides are involved in the degradation of these compounds and in their utilization as carbon and energy sources, or in the rescue of pyrimidine bases for nucleotide synthesis. This Shewanella sp. (strain MR-4) protein is Thymidine phosphorylase.